We begin with the raw amino-acid sequence, 302 residues long: MKMEELVREIERLKEERNAIIMAHNYQLPEIQDIADFLGDSLELARKAVNVDADVIVFVGVDFMAETAKILNPEKTVLLPTRRATCAMANMLKVEHILKAKEQYPDAPVVLYVNTTAETKAYADVTVTSANAVRIVEKLDSDVIIFGPDKNLASYVAKMTGKKVIPVPEYGHCYVHRQFTLEDVERARKLYPNAKLMVHPECEPEVQERADIIVSTGGMIRRAPEHDEWVVFTEREMVYRLQRLYPDIKFHPAKEDAICIGMKAITLNHIYESLRDMKYEVEVPEDIAEKARRAIERMLEMS.

Iminosuccinate contacts are provided by His-24 and Ser-41. Residue Cys-86 coordinates [4Fe-4S] cluster. Iminosuccinate-binding positions include 112–114 and Ser-129; that span reads YVN. A [4Fe-4S] cluster-binding site is contributed by Cys-173. Iminosuccinate is bound by residues 199 to 201 and Thr-216; that span reads HPE. [4Fe-4S] cluster is bound at residue Cys-259.

The protein belongs to the quinolinate synthase family. Type 2 subfamily. The cofactor is [4Fe-4S] cluster.

The protein resides in the cytoplasm. It catalyses the reaction iminosuccinate + dihydroxyacetone phosphate = quinolinate + phosphate + 2 H2O + H(+). It participates in cofactor biosynthesis; NAD(+) biosynthesis; quinolinate from iminoaspartate: step 1/1. Catalyzes the condensation of iminoaspartate with dihydroxyacetone phosphate to form quinolinate. The protein is Quinolinate synthase of Thermococcus onnurineus (strain NA1).